The primary structure comprises 86 residues: Beta-toxin Tz1 (86 aa).

Residues 1 to 20 (MTRFVLFICCFFLIGMVVEC) form the signal peptide. One can recognise an LCN-type CS-alpha/beta domain in the interval 21 to 83 (KDGYLVGNDG…TWDRATNRCG (63 aa)). 4 cysteine pairs are disulfide-bonded: Cys-31-Cys-82, Cys-35-Cys-57, Cys-43-Cys-63, and Cys-47-Cys-65. Position 84 is an arginine amide (Arg-84).

Belongs to the long (4 C-C) scorpion toxin superfamily. Sodium channel inhibitor family. Beta subfamily. Expressed by the venom gland.

The protein resides in the secreted. Its function is as follows. Beta toxins bind voltage-independently at site-4 of sodium channels (Nav) and shift the voltage of activation toward more negative potentials thereby affecting sodium channel activation and promoting spontaneous and repetitive firing. Strongly affects skeletal muscle channels Nav1.4/SCN4A, poorly affects the neuronal channels Nav1.6/SCN8A and Nav1.2/SCN2A. Induces spastic paralysis of rear limbs, increased salivation, apnea, tachycardia and increased perspiration. This Tityus zulianus (Venezuelan scorpion) protein is Beta-toxin Tz1.